Consider the following 216-residue polypeptide: Small ribosomal subunit protein uS3c (216 aa).

A KH type-2 domain is found at 43–118; it reads IKNYIQKNIR…KLNIAIVKIT (76 aa).

Belongs to the universal ribosomal protein uS3 family. In terms of assembly, part of the 30S ribosomal subunit.

It localises to the plastid. The protein resides in the chloroplast. This chain is Small ribosomal subunit protein uS3c (rps3), found in Phaseolus vulgaris (Kidney bean).